An 828-amino-acid chain; its full sequence is Periplasmic nitrate reductase (828 aa).

Positions 1–31 (MKLSRRHFMKANAVAAAAAVAGITIPIAVRA) form a signal peptide, tat-type signal. Residues 39–95 (IHWDKAPCRFCGVGCGVLVGTQNGRIVASQGDPDAPVNRGLNCIKGYFLPKIMYGQD) enclose the 4Fe-4S Mo/W bis-MGD-type domain. Positions 46, 49, 53, and 81 each coordinate [4Fe-4S] cluster. Residues Lys83, Gln150, Asn175, Cys179, 212–219 (WGSNMAEM), 243–247 (STYQH), 262–264 (QTD), Met372, Gln376, Asn482, 508–509 (SD), Lys531, Asp558, and 718–727 (TGRVLEHWHT) contribute to the Mo-bis(molybdopterin guanine dinucleotide) site. Phe794 contacts substrate. Mo-bis(molybdopterin guanine dinucleotide) contacts are provided by Asn802 and Lys819.

Belongs to the prokaryotic molybdopterin-containing oxidoreductase family. NasA/NapA/NarB subfamily. As to quaternary structure, component of the periplasmic nitrate reductase NapAB complex composed of NapA and NapB. [4Fe-4S] cluster is required as a cofactor. Requires Mo-bis(molybdopterin guanine dinucleotide) as cofactor. Predicted to be exported by the Tat system. The position of the signal peptide cleavage has not been experimentally proven.

Its subcellular location is the periplasm. The enzyme catalyses 2 Fe(II)-[cytochrome] + nitrate + 2 H(+) = 2 Fe(III)-[cytochrome] + nitrite + H2O. Functionally, catalytic subunit of the periplasmic nitrate reductase complex NapAB. Receives electrons from NapB and catalyzes the reduction of nitrate to nitrite. This Pectobacterium carotovorum subsp. carotovorum (strain PC1) protein is Periplasmic nitrate reductase.